The primary structure comprises 202 residues: Glycoprotein U22 (202 aa).

A signal peptide spans 1–20; the sequence is MVPQGCSLVWVSALYVSVIA. 4 N-linked (GlcNAc...) asparagine; by host glycosylation sites follow: asparagine 54, asparagine 107, asparagine 112, and asparagine 125. A helical membrane pass occupies residues 172–192; sequence FVYYCISVYLFAVVVLCSCWF.

The protein resides in the membrane. The chain is Glycoprotein U22 (U22) from Homo sapiens (Human).